We begin with the raw amino-acid sequence, 110 residues long: UPF0060 membrane protein Pmen_1247 (110 aa).

4 helical membrane-spanning segments follow: residues 5 to 25, 31 to 51, 59 to 79, and 84 to 104; these read LWFL…WMWL, AWWI…LTRV, AYAA…ALIE, and MLSD…ILFA.

It belongs to the UPF0060 family.

The protein resides in the cell inner membrane. This Ectopseudomonas mendocina (strain ymp) (Pseudomonas mendocina) protein is UPF0060 membrane protein Pmen_1247.